A 159-amino-acid polypeptide reads, in one-letter code: Transcriptional repressor NrdR (159 aa).

A zinc finger lies at 3 to 34 (CPFCHTPDTSVIDSRVSEEGDRIRRRRRCPHC). The 91-residue stretch at 49–139 (PQVVKQDGNR…VYRSFQGAAD (91 aa)) folds into the ATP-cone domain.

This sequence belongs to the NrdR family. Zn(2+) serves as cofactor.

Functionally, negatively regulates transcription of bacterial ribonucleotide reductase nrd genes and operons by binding to NrdR-boxes. This Nitrosospira multiformis (strain ATCC 25196 / NCIMB 11849 / C 71) protein is Transcriptional repressor NrdR.